The sequence spans 259 residues: MARKPLIAGNWKMNLDHQQAIGTVQKLAFALPKEYFEKVDVAVTVPFTDIRSVQTLVEGDKLEVTFGAQDVSQHESGAYTGEVSASMLAKLNCSWVVVGHSERREYHNESDELVAAKAKAALSNGISPIVCVGEPLEIREAGTHVEYVVEQTRKSLAGLDAAELANTVIAYEPVWAIGTGKVASAADAQEVCKAIRGLIVELAGDEVAEGLRILYGGSVKAETVAEIVGQPDVDGGLVGGASLDGEAFAKLAANAASVA.

10–12 serves as a coordination point for substrate; the sequence is NWK. Histidine 100 (electrophile) is an active-site residue. Glutamate 172 serves as the catalytic Proton acceptor. Substrate contacts are provided by residues glycine 178, serine 218, and 239–240; that span reads GG.

Belongs to the triosephosphate isomerase family. As to quaternary structure, homodimer.

The protein resides in the cytoplasm. It carries out the reaction D-glyceraldehyde 3-phosphate = dihydroxyacetone phosphate. The protein operates within carbohydrate biosynthesis; gluconeogenesis. Its pathway is carbohydrate degradation; glycolysis; D-glyceraldehyde 3-phosphate from glycerone phosphate: step 1/1. Functionally, involved in the gluconeogenesis. Catalyzes stereospecifically the conversion of dihydroxyacetone phosphate (DHAP) to D-glyceraldehyde-3-phosphate (G3P). In Corynebacterium glutamicum (strain ATCC 13032 / DSM 20300 / JCM 1318 / BCRC 11384 / CCUG 27702 / LMG 3730 / NBRC 12168 / NCIMB 10025 / NRRL B-2784 / 534), this protein is Triosephosphate isomerase.